Here is a 204-residue protein sequence, read N- to C-terminus: Nucleoside triphosphate pyrophosphatase (204 aa).

The active-site Proton acceptor is the Asp-79.

Belongs to the Maf family. Requires a divalent metal cation as cofactor.

The protein resides in the cytoplasm. It carries out the reaction a ribonucleoside 5'-triphosphate + H2O = a ribonucleoside 5'-phosphate + diphosphate + H(+). The catalysed reaction is a 2'-deoxyribonucleoside 5'-triphosphate + H2O = a 2'-deoxyribonucleoside 5'-phosphate + diphosphate + H(+). Its function is as follows. Nucleoside triphosphate pyrophosphatase. May have a dual role in cell division arrest and in preventing the incorporation of modified nucleotides into cellular nucleic acids. This chain is Nucleoside triphosphate pyrophosphatase, found in Trichodesmium erythraeum (strain IMS101).